The following is an 86-amino-acid chain: Immunity protein CdiI-1 (86 aa).

In terms of assembly, interacts with the C-terminal fragment (CT) of cognate toxin protein CdiA-EC869.

Functionally, immunity protein component of a toxin-immunity protein module, which functions as a cellular contact-dependent growth inhibition (CDI) system. CDI modules allow bacteria to communicate with and inhibit the growth of closely related neighboring bacteria in a contact-dependent fashion. Neutralizes the toxic activity of cognate toxin CdiA-EC869 (the C-terminal 289 residue CT fragment). Does not inhibit toxic activity of CdiA from other toxin-immunity modules or strains of E.coli. The sequence is that of Immunity protein CdiI-1 from Escherichia coli O157:H7 (strain EC869).